The chain runs to 290 residues: Bifunctional protein FolD (290 aa).

NADP(+) is bound by residues 169–171, isoleucine 194, and isoleucine 235; that span reads GAS.

Belongs to the tetrahydrofolate dehydrogenase/cyclohydrolase family. As to quaternary structure, homodimer.

It carries out the reaction (6R)-5,10-methylene-5,6,7,8-tetrahydrofolate + NADP(+) = (6R)-5,10-methenyltetrahydrofolate + NADPH. The enzyme catalyses (6R)-5,10-methenyltetrahydrofolate + H2O = (6R)-10-formyltetrahydrofolate + H(+). It functions in the pathway one-carbon metabolism; tetrahydrofolate interconversion. Functionally, catalyzes the oxidation of 5,10-methylenetetrahydrofolate to 5,10-methenyltetrahydrofolate and then the hydrolysis of 5,10-methenyltetrahydrofolate to 10-formyltetrahydrofolate. The chain is Bifunctional protein FolD from Helicobacter pylori (strain J99 / ATCC 700824) (Campylobacter pylori J99).